The chain runs to 164 residues: Large ribosomal subunit protein uL15 (164 aa).

The interval 1–52 (MSLSKLKAPKGANRERTRVGRGQGSGLGKTAGRGGKGQKARSGNMHFEGFEG) is disordered. The segment covering 21–37 (RGQGSGLGKTAGRGGKG) has biased composition (gly residues).

The protein belongs to the universal ribosomal protein uL15 family. Part of the 50S ribosomal subunit.

Binds to the 23S rRNA. The protein is Large ribosomal subunit protein uL15 of Anaeromyxobacter sp. (strain Fw109-5).